The sequence spans 186 residues: Ribosome-recycling factor (186 aa).

This sequence belongs to the RRF family.

The protein resides in the cytoplasm. Responsible for the release of ribosomes from messenger RNA at the termination of protein biosynthesis. May increase the efficiency of translation by recycling ribosomes from one round of translation to another. In Bordetella petrii (strain ATCC BAA-461 / DSM 12804 / CCUG 43448), this protein is Ribosome-recycling factor.